The following is a 231-amino-acid chain: Ribosomal RNA small subunit methyltransferase G (231 aa).

Residues Gly-92, Leu-97, 143–144 (VE), and Arg-162 contribute to the S-adenosyl-L-methionine site.

This sequence belongs to the methyltransferase superfamily. RNA methyltransferase RsmG family.

It localises to the cytoplasm. It catalyses the reaction guanosine(527) in 16S rRNA + S-adenosyl-L-methionine = N(7)-methylguanosine(527) in 16S rRNA + S-adenosyl-L-homocysteine. In terms of biological role, specifically methylates the N7 position of guanine in position 527 of 16S rRNA. The polypeptide is Ribosomal RNA small subunit methyltransferase G (Burkholderia thailandensis (strain ATCC 700388 / DSM 13276 / CCUG 48851 / CIP 106301 / E264)).